The chain runs to 297 residues: Acetylglutamate kinase (297 aa).

Substrate is bound by residues 70–71 (GG), arginine 92, and asparagine 194.

This sequence belongs to the acetylglutamate kinase family. ArgB subfamily.

It is found in the cytoplasm. The catalysed reaction is N-acetyl-L-glutamate + ATP = N-acetyl-L-glutamyl 5-phosphate + ADP. The protein operates within amino-acid biosynthesis; L-arginine biosynthesis; N(2)-acetyl-L-ornithine from L-glutamate: step 2/4. Its function is as follows. Catalyzes the ATP-dependent phosphorylation of N-acetyl-L-glutamate. In Janthinobacterium sp. (strain Marseille) (Minibacterium massiliensis), this protein is Acetylglutamate kinase.